We begin with the raw amino-acid sequence, 686 residues long: NADH-ubiquinone oxidoreductase chain 5 (686 aa).

17 consecutive transmembrane segments (helical) span residues 3–23, 40–60, 101–121, 139–159, 160–180, 198–218, 222–242, 261–281, 293–313, 321–341, 350–370, 382–402, 432–452, 472–492, 526–546, 635–655, and 665–685; these read LIILFLPFVGAFISGFLGRFV, ALLSLYYWLSINELIIGLFSF, ITLPFLFTVLFISFLIHLFSV, LFTFFMAILVTGANYFVLFVG, WEGIGVVSYLLINFWFTRIQA, LSIAYFVMLPAFGSADFSTVF, AYINQTTITIIGFLLLVGAMA, TPVSALIHAATLVTAGSYLLI, VLLVITIIGASTAFFAATCGL, IIAFSTISQLGYMVMAIGLSQ, LFHAYFKALLFLGAGSVIHAF, LINFLPFTYAVMLVGTLSLLA, ILGSVTAGLTAFYSFRLISLV, ITVIIPLAVLAIFSIFFGYVT, LIFKLLPTIFSLAGTLFALYL, ALYITLGLLSLLFIVFAPMLV, and LIILFIFTLIVNSAYLNKKLS.

This sequence belongs to the complex I subunit 5 family.

The protein localises to the mitochondrion inner membrane. It carries out the reaction a ubiquinone + NADH + 5 H(+)(in) = a ubiquinol + NAD(+) + 4 H(+)(out). Core subunit of the mitochondrial membrane respiratory chain NADH dehydrogenase (Complex I) that is believed to belong to the minimal assembly required for catalysis. Complex I functions in the transfer of electrons from NADH to the respiratory chain. The immediate electron acceptor for the enzyme is believed to be ubiquinone. This is NADH-ubiquinone oxidoreductase chain 5 (ND5) from Schizophyllum commune (Split gill fungus).